Consider the following 1257-residue polypeptide: MASVCGAPSPGGALGSQAPAWYHRDLSRAAAEELLARAGRDGSFLVRDSESVAGAFALCVLYQKHVHTYRILPDGEDFLAVQTSQGVPVRRFQTLGELIGLYAQPNQGLVCALLLPVEGEREPDPPDDRDASDVEDEKPPLPPRSGSTSISVPAGPSSPLPAPETPTTPAAESTPNGLSTVSHEYLKGSYGLDLEAVRGGASNLPHLTRTLVTSCRRLHSEVDKVLSGLEILSKVFDQQSSPMVTRLLQQQSLPQTGEQELESLVLKLSVLKDFLSGIQKKALKALQDMSSTAPPAPLQPSIRKAKTIPVQAFEVKLDVTLGDLTKIGKSQKFTLSVDVEGGRLVLLRRQRDSQEDWTTFTHDRIRQLIKSQRVQNKLGVVFEKEKDRTQRKDFIFVSARKREAFCQLLQLMKNKHSKQDEPDMISVFIGTWNMGSVPPPKNVTSWFTSKGLGKALDEVTVTIPHDIYVFGTQENSVGDREWLDLLRGGLKELTDLDYRPIAMQSLWNIKVAVLVKPEHENRISHVSTSSVKTGIANTLGNKGAVGVSFMFNGTSFGFVNCHLTSGNEKTTRRNQNYLDILRLLSLGDRQLSAFDISLRFTHLFWFGDLNYRLDMDIQEILNYISRREFEPLLRVDQLNLEREKHKVFLRFSEEEISFPPTYRYERGSRDTYAWHKQKPTGVRTNVPSWCDRILWKSYPETHIICNSYGCTDDIVTSDHSPVFGTFEVGVTSQFISKKGLSKTSDQAYIEFESIEAIVKTASRTKFFIEFYSTCLEEYKKSFENDAQSSDNINFLKVQWSSRQLPTLKPILADIEYLQDQHLLLTVKSMDGYESYGECVVALKSMIGSTAQQFLTFLSHRGEETGNIRGSMKVRVPTERLGTRERLYEWISIDKDDTGAKSKAPSVLRGSQEHRSGSRKPTSTEASCPLSKLFEEPEKPPPTGRPPAPPRAVPREESLNPRLKSEGTPEQEGVAAPPPKNSFNNPAYYVLEGVPHQLLPLEPTSFARAPIPPTTKNKVAITVPAPQLGRHRTPRVGEGSSSDEDSGGTLPPPDFPPPPLPDSAIFLPPNLDPLSMPVVRGRSVGEARGPPPPKAHPRPPLPPGTSPASTFLEEVASADDRSCSVLQMAKTLSEVDYSPGPGRSALLPNPLELQLPRGPSDYGRPLSFPPPRIRESIQEDLAEEAPCPQGGRASGLGEAGMGAWLRAIGLERYEEGLVHNGWDDLEFLSDITEEDLEEAGVQDPAHKRLLLDTLQLSK.

The region spanning 21–117 is the SH2 domain; the sequence is WYHRDLSRAA…GLVCALLLPV (97 aa). The span at 119–132 shows a compositional bias: basic and acidic residues; the sequence is GEREPDPPDDRDAS. The disordered stretch occupies residues 119-181; it reads GEREPDPPDD…ESTPNGLSTV (63 aa). At serine 132 the chain carries Phosphoserine. Over residues 156-166 the composition is skewed to pro residues; it reads PSSPLPAPETP. Phosphothreonine is present on threonine 165. Phosphoserine is present on residues serine 241 and serine 353. Tyrosine 887 is subject to Phosphotyrosine. A Phosphoserine modification is found at serine 891. Residues 897–986 are disordered; sequence TGAKSKAPSV…PPKNSFNNPA (90 aa). Pro residues predominate over residues 939 to 951; sequence PPPTGRPPAPPRA. The short motif at 945-950 is the SH3-binding element; it reads PPAPPR. Basic and acidic residues predominate over residues 952-966; it reads VPREESLNPRLKSEG. The NPXY motif motif lies at 984–987; sequence NPAY. Tyrosine 987 carries the phosphotyrosine modification. A disordered region spans residues 1004 to 1115; sequence SFARAPIPPT…PASTFLEEVA (112 aa). Pro residues-rich tracts occupy residues 1049–1060 and 1088–1104; these read LPPPDFPPPPLP and GPPP…PPGT. Position 1132 is a phosphoserine (serine 1132). Phosphotyrosine occurs at positions 1136 and 1161. The SAM domain occupies 1195–1257; that stretch reads LGEAGMGAWL…LLLDTLQLSK (63 aa). Serine 1256 is subject to Phosphoserine.

Belongs to the inositol 1,4,5-trisphosphate 5-phosphatase family. In terms of assembly, interacts with tyrosine phosphorylated form of SHC1. Interacts with EGFR. Upon stimulation by the EGF signaling pathway, it forms a complex with SHC1 and EGFR. Interacts with cytoskeletal protein SORBS3/vinexin, promoting its localization to the periphery of cells. Forms a complex with filamin (FLNA or FLNB), actin, GPIb (GP1BA or GP1BB) that regulates cortical and submembraneous actin. Interacts with c-Met/MET, when c-Met/MET is phosphorylated on 'Tyr-1356'. Interacts with p130Cas/BCAR1. Interacts with CENTD3/ARAP3 via its SAM domain. Interacts with c-Cbl/CBL and CAP/SORBS1. Interacts with activated EPHA2 receptor. Interacts with receptors FCGR2A. Interacts with FCGR2B. Interacts with tyrosine kinase ABL1. Interacts with tyrosine kinase TEC. Interacts with CSF1R. Interacts (via N-terminus) with SH3YL1 (via SH3 domain). Interacts (via SH2 domain) with tyrosine phosphorylated KLRC1 (via ITIM). Interacts with NEDD9/HEF1. Tyrosine phosphorylated by the members of the SRC family after exposure to a diverse array of extracellular stimuli such as insulin, growth factors such as EGF or PDGF, chemokines, integrin ligands and hypertonic and oxidative stress. May be phosphorylated upon IgG receptor FCGR2B-binding. Phosphorylated at Tyr-987 following cell attachment and spreading. Phosphorylated at Tyr-1161 following EGF signaling pathway stimulation.

It localises to the cytoplasm. The protein resides in the cytosol. It is found in the cytoskeleton. The protein localises to the membrane. Its subcellular location is the cell projection. It localises to the filopodium. The protein resides in the lamellipodium. It is found in the basal cell membrane. The protein localises to the nucleus. Its subcellular location is the nucleus speckle. It localises to the spindle pole. It carries out the reaction a 1,2-diacyl-sn-glycero-3-phospho-(1D-myo-inositol-3,4,5-trisphosphate) + H2O = a 1,2-diacyl-sn-glycero-3-phospho-(1D-myo-inositol-3,4-bisphosphate) + phosphate. The enzyme catalyses 1,2-dioctanoyl-sn-glycero-3-phospho-(1D-myo-inositol-3,4,5-trisphosphate) + H2O = 1,2-dioctanoyl-sn-glycero-3-phospho-(1D-myo-inositol-3,4-bisphosphate) + phosphate. The catalysed reaction is 1,2-dihexadecanoyl-sn-glycero-3-phospho-(1D-myo-inositol-3,4,5-trisphosphate) + H2O = 1,2-dihexadecanoyl-sn-glycero-3-phospho-(1D-myo-inositol-3,4-bisphosphate) + phosphate. Activated upon translocation to the sites of synthesis of PtdIns(3,4,5)P3 in the membrane. Enzymatic activity is enhanced in the presence of phosphatidylserine. Phosphatidylinositol (PtdIns) phosphatase that specifically hydrolyzes the 5-phosphate of phosphatidylinositol-3,4,5-trisphosphate (PtdIns(3,4,5)P3) to produce PtdIns(3,4)P2, thereby negatively regulating the PI3K (phosphoinositide 3-kinase) pathways. Required for correct mitotic spindle orientation and therefore progression of mitosis. Plays a central role in regulation of PI3K-dependent insulin signaling, although the precise molecular mechanisms and signaling pathways remain unclear. While overexpression reduces both insulin-stimulated MAP kinase and Akt activation, its absence does not affect insulin signaling or GLUT4 trafficking. Confers resistance to dietary obesity. May act by regulating AKT2, but not AKT1, phosphorylation at the plasma membrane. Part of a signaling pathway that regulates actin cytoskeleton remodeling. Required for the maintenance and dynamic remodeling of actin structures as well as in endocytosis, having a major impact on ligand-induced EGFR internalization and degradation. Participates in regulation of cortical and submembraneous actin by hydrolyzing PtdIns(3,4,5)P3 thereby regulating membrane ruffling. Regulates cell adhesion and cell spreading. Required for HGF-mediated lamellipodium formation, cell scattering and spreading. Acts as a negative regulator of EPHA2 receptor endocytosis by inhibiting via PI3K-dependent Rac1 activation. Acts as a regulator of neuritogenesis by regulating PtdIns(3,4,5)P3 level and is required to form an initial protrusive pattern, and later, maintain proper neurite outgrowth. Acts as a negative regulator of the FC-gamma-RIIA receptor (FCGR2A). Mediates signaling from the FC-gamma-RIIB receptor (FCGR2B), playing a central role in terminating signal transduction from activating immune/hematopoietic cell receptor systems. Involved in EGF signaling pathway. Upon stimulation by EGF, it is recruited by EGFR and dephosphorylates PtdIns(3,4,5)P3. Plays a negative role in regulating the PI3K-PKB pathway, possibly by inhibiting PKB activity. Down-regulates Fc-gamma-R-mediated phagocytosis in macrophages independently of INPP5D/SHIP1. In macrophages, down-regulates NF-kappa-B-dependent gene transcription by regulating macrophage colony-stimulating factor (M-CSF)-induced signaling. Plays a role in the localization of AURKA and NEDD9/HEF1 to the basolateral membrane at interphase in polarized cysts, thereby mediates cell cycle homeostasis, cell polarization and cilia assembly. Additionally promotion of cilia growth is also facilitated by hydrolysis of (PtdIns(3,4,5)P3) to PtdIns(3,4)P2. Promotes formation of apical membrane-initiation sites during the initial stages of lumen formation via Rho family-induced actin filament organization and CTNNB1 localization to cell-cell contacts. May also hydrolyze PtdIns(1,3,4,5)P4, and could thus affect the levels of the higher inositol polyphosphates like InsP6. Involved in endochondral ossification. In Rattus norvegicus (Rat), this protein is Phosphatidylinositol 3,4,5-trisphosphate 5-phosphatase 2.